A 387-amino-acid polypeptide reads, in one-letter code: D(4) dopamine receptor (387 aa).

Residues Met1–Ala34 are Extracellular-facing. Asn3 carries an N-linked (GlcNAc...) asparagine glycan. Residues Leu35–Ala57 traverse the membrane as a helical segment. Residues Ser58 to Asn67 lie on the Cytoplasmic side of the membrane. Residues Tyr68–Tyr90 form a helical membrane-spanning segment. Position 77 (Asp77) interacts with Na(+). Topologically, residues Ser91–Asp106 are extracellular. A disulfide bond links Cys105 and Cys180. A helical transmembrane segment spans residues Thr107–Val128. Ser119 provides a ligand contact to Na(+). Topologically, residues Asp129–Cys146 are cytoplasmic. Residues Gln147 to Asn170 traverse the membrane as a helical segment. The Extracellular portion of the chain corresponds to Asp171 to Asp186. The helical transmembrane segment at Tyr187–Trp208 threads the bilayer. At Ala209 to Arg314 the chain is on the cytoplasmic side. Disordered stretches follow at residues Lys224 to Pro247 and Ala287 to Thr306. Residues Val315 to Arg337 traverse the membrane as a helical segment. Topologically, residues Ala338–Ser346 are extracellular. Cysteines 340 and 343 form a disulfide. The helical transmembrane segment at Pro347–Thr369 threads the bilayer. Residues Ile370–Cys387 lie on the Cytoplasmic side of the membrane. Cys387 carries S-palmitoyl cysteine lipidation.

This sequence belongs to the G-protein coupled receptor 1 family. In terms of assembly, forms homo- and heterooligomers with DRD2. D4.7 allele exhibits higher affinity for homodimers compared to DRD2 heterodimers, while alleles D42. and 4.4 have similar affinities for both. The interaction with DRD2 may modulate agonist-induced downstream signaling. Interacts with CLIC6. Interacts with GPRASP1. May interact with ADORA2A. Interacts with KLHL12. In terms of processing, palmitoylated. Palmitoylation of the C-terminal Cys is important for normal expression at the cell membrane. In terms of tissue distribution, detected in olfactory bulb, hypothalamus, olfactory tubercle, brainstem and striatum.

The protein localises to the cell membrane. Its function is as follows. Dopamine receptor responsible for neuronal signaling in the mesolimbic system of the brain, an area of the brain that regulates emotion and complex behavior. Activated by dopamine, but also by epinephrine and norepinephrine, and by numerous synthetic agonists and drugs. Agonist binding triggers signaling via G proteins that inhibit adenylyl cyclase. Modulates the circadian rhythm of contrast sensitivity by regulating the rhythmic expression of NPAS2 in the retinal ganglion cells. The polypeptide is D(4) dopamine receptor (Drd4) (Mus musculus (Mouse)).